A 24-amino-acid polypeptide reads, in one-letter code: Small ribosomal subunit protein uS19c (24 aa).

This sequence belongs to the universal ribosomal protein uS19 family.

Its subcellular location is the plastid. The protein localises to the chloroplast. Functionally, protein S19 forms a complex with S13 that binds strongly to the 16S ribosomal RNA. The protein is Small ribosomal subunit protein uS19c (rps19) of Petunia hybrida (Petunia).